Consider the following 218-residue polypeptide: Large ribosomal subunit protein uL3 (218 aa).

Gln-154 carries the post-translational modification N5-methylglutamine.

The protein belongs to the universal ribosomal protein uL3 family. Part of the 50S ribosomal subunit. Forms a cluster with proteins L14 and L19. In terms of processing, methylated by PrmB.

Its function is as follows. One of the primary rRNA binding proteins, it binds directly near the 3'-end of the 23S rRNA, where it nucleates assembly of the 50S subunit. The chain is Large ribosomal subunit protein uL3 from Polynucleobacter asymbioticus (strain DSM 18221 / CIP 109841 / QLW-P1DMWA-1) (Polynucleobacter necessarius subsp. asymbioticus).